A 279-amino-acid polypeptide reads, in one-letter code: Methylthioribulose-1-phosphate dehydratase (279 aa).

C132 provides a ligand contact to substrate. Zn(2+)-binding residues include H150 and H152. The active-site Proton donor/acceptor is E175. H240 is a Zn(2+) binding site.

Belongs to the aldolase class II family. MtnB subfamily. It depends on Zn(2+) as a cofactor.

Its subcellular location is the cytoplasm. The enzyme catalyses 5-(methylsulfanyl)-D-ribulose 1-phosphate = 5-methylsulfanyl-2,3-dioxopentyl phosphate + H2O. Its pathway is amino-acid biosynthesis; L-methionine biosynthesis via salvage pathway; L-methionine from S-methyl-5-thio-alpha-D-ribose 1-phosphate: step 2/6. In terms of biological role, catalyzes the dehydration of methylthioribulose-1-phosphate (MTRu-1-P) into 2,3-diketo-5-methylthiopentyl-1-phosphate (DK-MTP-1-P). This Candida tropicalis (strain ATCC MYA-3404 / T1) (Yeast) protein is Methylthioribulose-1-phosphate dehydratase.